A 254-amino-acid chain; its full sequence is Flavin-dependent thymidylate synthase (254 aa).

The ThyX domain maps to 7–237 (LRVQLIAKTE…PAVFADFEIT (231 aa)). Residues 92-95 (ELIR), 103-107 (QLSQR), and histidine 176 contribute to the dUMP site. Residues 95–97 (RHR) and glutamine 103 contribute to the FAD site. The short motif at 95–105 (RHRHFSYSQLS) is the ThyX motif element. FAD is bound by residues 192 to 194 (NYR) and histidine 198. Arginine 203 contributes to the dUMP binding site. The active-site Involved in ionization of N3 of dUMP, leading to its activation is the arginine 203.

This sequence belongs to the thymidylate synthase ThyX family. Homotetramer. The cofactor is FAD.

It carries out the reaction dUMP + (6R)-5,10-methylene-5,6,7,8-tetrahydrofolate + NADPH + H(+) = dTMP + (6S)-5,6,7,8-tetrahydrofolate + NADP(+). It participates in pyrimidine metabolism; dTTP biosynthesis. In terms of biological role, catalyzes the reductive methylation of 2'-deoxyuridine-5'-monophosphate (dUMP) to 2'-deoxythymidine-5'-monophosphate (dTMP) while utilizing 5,10-methylenetetrahydrofolate (mTHF) as the methyl donor, and NADPH and FADH(2) as the reductant. In Mycobacterium leprae (strain Br4923), this protein is Flavin-dependent thymidylate synthase.